A 522-amino-acid polypeptide reads, in one-letter code: DNA primase DnaG (522 aa).

The 87-residue stretch at 171 to 257 (DAIIILEGRA…CVEDLVQKEI (87 aa)) folds into the Toprim domain. 3 residues coordinate Mg(2+): glutamate 177, aspartate 219, and aspartate 221.

Belongs to the archaeal DnaG primase family. As to quaternary structure, forms a ternary complex with MCM helicase and DNA. Component of the archaeal exosome complex. Mg(2+) serves as cofactor.

It catalyses the reaction ssDNA + n NTP = ssDNA/pppN(pN)n-1 hybrid + (n-1) diphosphate.. Functionally, RNA polymerase that catalyzes the synthesis of short RNA molecules used as primers for DNA polymerase during DNA replication. Also part of the exosome, which is a complex involved in RNA degradation. Acts as a poly(A)-binding protein that enhances the interaction between heteromeric, adenine-rich transcripts and the exosome. This is DNA primase DnaG from Methanosarcina mazei (strain ATCC BAA-159 / DSM 3647 / Goe1 / Go1 / JCM 11833 / OCM 88) (Methanosarcina frisia).